A 577-amino-acid polypeptide reads, in one-letter code: Proline--tRNA ligase (577 aa).

The protein belongs to the class-II aminoacyl-tRNA synthetase family. ProS type 1 subfamily. In terms of assembly, homodimer.

Its subcellular location is the cytoplasm. It carries out the reaction tRNA(Pro) + L-proline + ATP = L-prolyl-tRNA(Pro) + AMP + diphosphate. Catalyzes the attachment of proline to tRNA(Pro) in a two-step reaction: proline is first activated by ATP to form Pro-AMP and then transferred to the acceptor end of tRNA(Pro). As ProRS can inadvertently accommodate and process non-cognate amino acids such as alanine and cysteine, to avoid such errors it has two additional distinct editing activities against alanine. One activity is designated as 'pretransfer' editing and involves the tRNA(Pro)-independent hydrolysis of activated Ala-AMP. The other activity is designated 'posttransfer' editing and involves deacylation of mischarged Ala-tRNA(Pro). The misacylated Cys-tRNA(Pro) is not edited by ProRS. This chain is Proline--tRNA ligase, found in Chlamydia felis (strain Fe/C-56) (Chlamydophila felis).